Consider the following 336-residue polypeptide: CENP-A histone chaperone scm3 (336 aa).

The disordered stretch occupies residues 243 to 269; it reads RRRNPLLSSPKTPLRRSFSKSKVRNSN. Over residues 255–269 the composition is skewed to basic residues; that stretch reads PLRRSFSKSKVRNSN.

The protein localises to the cytoplasm. It localises to the nucleus. In terms of biological role, centromeric protein that plays a central role in the incorporation and maintenance of histone H3-like variant CENPA at centromeres. The sequence is that of CENP-A histone chaperone scm3 from Schizosaccharomyces pombe (strain 972 / ATCC 24843) (Fission yeast).